Here is a 550-residue protein sequence, read N- to C-terminus: Dihydroxy-acid dehydratase (550 aa).

Asp-78 contacts Mg(2+). A [2Fe-2S] cluster-binding site is contributed by Cys-119. Positions 120 and 121 each coordinate Mg(2+). Lys-121 carries the N6-carboxylysine modification. Residue Cys-191 participates in [2Fe-2S] cluster binding. Residue Glu-440 coordinates Mg(2+). Ser-466 functions as the Proton acceptor in the catalytic mechanism.

It belongs to the IlvD/Edd family. As to quaternary structure, homodimer. Requires [2Fe-2S] cluster as cofactor. The cofactor is Mg(2+).

It catalyses the reaction (2R)-2,3-dihydroxy-3-methylbutanoate = 3-methyl-2-oxobutanoate + H2O. The enzyme catalyses (2R,3R)-2,3-dihydroxy-3-methylpentanoate = (S)-3-methyl-2-oxopentanoate + H2O. Its pathway is amino-acid biosynthesis; L-isoleucine biosynthesis; L-isoleucine from 2-oxobutanoate: step 3/4. It participates in amino-acid biosynthesis; L-valine biosynthesis; L-valine from pyruvate: step 3/4. Functionally, functions in the biosynthesis of branched-chain amino acids. Catalyzes the dehydration of (2R,3R)-2,3-dihydroxy-3-methylpentanoate (2,3-dihydroxy-3-methylvalerate) into 2-oxo-3-methylpentanoate (2-oxo-3-methylvalerate) and of (2R)-2,3-dihydroxy-3-methylbutanoate (2,3-dihydroxyisovalerate) into 2-oxo-3-methylbutanoate (2-oxoisovalerate), the penultimate precursor to L-isoleucine and L-valine, respectively. The sequence is that of Dihydroxy-acid dehydratase from Methanococcus maripaludis (strain C6 / ATCC BAA-1332).